Reading from the N-terminus, the 660-residue chain is Acetyl-coenzyme A synthetase (660 aa).

CoA-binding positions include 197–200 and Thr-317; that span reads RGGK. Residues 397–399, 421–426, Asp-512, and Arg-528 contribute to the ATP site; these read GEP and DTWWQT. Ser-536 is a binding site for CoA. Arg-539 contributes to the ATP binding site. 3 residues coordinate Mg(2+): Val-550, His-552, and Val-555. Position 625 is an N6-acetyllysine (Lys-625).

Belongs to the ATP-dependent AMP-binding enzyme family. Mg(2+) is required as a cofactor. Post-translationally, acetylated. Deacetylation by the SIR2-homolog deacetylase activates the enzyme.

The catalysed reaction is acetate + ATP + CoA = acetyl-CoA + AMP + diphosphate. Its function is as follows. Catalyzes the conversion of acetate into acetyl-CoA (AcCoA), an essential intermediate at the junction of anabolic and catabolic pathways. AcsA undergoes a two-step reaction. In the first half reaction, AcsA combines acetate with ATP to form acetyl-adenylate (AcAMP) intermediate. In the second half reaction, it can then transfer the acetyl group from AcAMP to the sulfhydryl group of CoA, forming the product AcCoA. This Burkholderia thailandensis (strain ATCC 700388 / DSM 13276 / CCUG 48851 / CIP 106301 / E264) protein is Acetyl-coenzyme A synthetase.